The sequence spans 234 residues: UPF0502 protein BPSS1373 (234 aa).

This sequence belongs to the UPF0502 family.

This chain is UPF0502 protein BPSS1373, found in Burkholderia pseudomallei (strain K96243).